A 258-amino-acid polypeptide reads, in one-letter code: Thiazole synthase (258 aa).

Lysine 98 serves as the catalytic Schiff-base intermediate with DXP. 1-deoxy-D-xylulose 5-phosphate is bound by residues glycine 159, 185–186, and 207–208; these read AG and NT.

This sequence belongs to the ThiG family. Homotetramer. Forms heterodimers with either ThiH or ThiS.

It is found in the cytoplasm. The enzyme catalyses [ThiS sulfur-carrier protein]-C-terminal-Gly-aminoethanethioate + 2-iminoacetate + 1-deoxy-D-xylulose 5-phosphate = [ThiS sulfur-carrier protein]-C-terminal Gly-Gly + 2-[(2R,5Z)-2-carboxy-4-methylthiazol-5(2H)-ylidene]ethyl phosphate + 2 H2O + H(+). It participates in cofactor biosynthesis; thiamine diphosphate biosynthesis. Its function is as follows. Catalyzes the rearrangement of 1-deoxy-D-xylulose 5-phosphate (DXP) to produce the thiazole phosphate moiety of thiamine. Sulfur is provided by the thiocarboxylate moiety of the carrier protein ThiS. In vitro, sulfur can be provided by H(2)S. The chain is Thiazole synthase from Cytophaga hutchinsonii (strain ATCC 33406 / DSM 1761 / CIP 103989 / NBRC 15051 / NCIMB 9469 / D465).